A 435-amino-acid chain; its full sequence is NADH-quinone oxidoreductase subunit D (435 aa).

Belongs to the complex I 49 kDa subunit family. In terms of assembly, NDH-1 is composed of 14 different subunits. Subunits NuoB, C, D, E, F, and G constitute the peripheral sector of the complex.

Its subcellular location is the cell inner membrane. It catalyses the reaction a quinone + NADH + 5 H(+)(in) = a quinol + NAD(+) + 4 H(+)(out). Functionally, NDH-1 shuttles electrons from NADH, via FMN and iron-sulfur (Fe-S) centers, to quinones in the respiratory chain. The immediate electron acceptor for the enzyme in this species is believed to be ubiquinone. Couples the redox reaction to proton translocation (for every two electrons transferred, four hydrogen ions are translocated across the cytoplasmic membrane), and thus conserves the redox energy in a proton gradient. The polypeptide is NADH-quinone oxidoreductase subunit D (Xanthomonas axonopodis pv. citri (strain 306)).